A 149-amino-acid polypeptide reads, in one-letter code: Sec-independent protein translocase protein TatB (149 aa).

Residues 1-22 (MFDGIGFMELLLIGVLGLIVLG) traverse the membrane as a helical segment. A compositionally biased stretch (polar residues) spans 86–113 (LKQAAQSVNRPYQVQDTPSAQDNQIHNP). The tract at residues 86–149 (LKQAAQSVNR…DPRSNTKANG (64 aa)) is disordered. The segment covering 114–135 (ASQTVSTEASSTSASSAPKSES) has biased composition (low complexity).

The protein belongs to the TatB family. As to quaternary structure, the Tat system comprises two distinct complexes: a TatABC complex, containing multiple copies of TatA, TatB and TatC subunits, and a separate TatA complex, containing only TatA subunits. Substrates initially bind to the TatABC complex, which probably triggers association of the separate TatA complex to form the active translocon.

The protein resides in the cell inner membrane. Part of the twin-arginine translocation (Tat) system that transports large folded proteins containing a characteristic twin-arginine motif in their signal peptide across membranes. Together with TatC, TatB is part of a receptor directly interacting with Tat signal peptides. TatB may form an oligomeric binding site that transiently accommodates folded Tat precursor proteins before their translocation. The sequence is that of Sec-independent protein translocase protein TatB from Shewanella oneidensis (strain ATCC 700550 / JCM 31522 / CIP 106686 / LMG 19005 / NCIMB 14063 / MR-1).